Reading from the N-terminus, the 84-residue chain is Large ribosomal subunit protein bL27 (84 aa).

Positions 1–21 (MAHKKGVGSSRNGRDSDGQRL) are disordered.

Belongs to the bacterial ribosomal protein bL27 family.

In Trichlorobacter lovleyi (strain ATCC BAA-1151 / DSM 17278 / SZ) (Geobacter lovleyi), this protein is Large ribosomal subunit protein bL27.